The sequence spans 244 residues: High affinity immunoglobulin epsilon receptor subunit beta (244 aa).

The Cytoplasmic portion of the chain corresponds to 1–59 (MDTESNRRANLALPQEPSSVPAFEVLEISPQEVSSGRLLKSASSPPLHTWLTVLKKEQE). Residues 60 to 79 (FLGVTQILTAMICLCFGTVV) form a helical membrane-spanning segment. Residues 80 to 97 (CSVLDISHIEGDIFSSFK) are Extracellular-facing. The chain crosses the membrane as a helical span at residues 98–117 (AGYPFWGAIFFSISGMLSII). Topologically, residues 118 to 130 (SERRNATYLVRGS) are cytoplasmic. The chain crosses the membrane as a helical span at residues 131-150 (LGANTASSIAGGTGITILII). The Extracellular segment spans residues 151–180 (NLKKSLAYIHIHSCQKFFETKCFMASFSTE). The chain crosses the membrane as a helical span at residues 181-200 (IVVMMLFLTILGLGSAVSLT). Residues 201–244 (ICGAGEELKGNKVPEDRVYEELNIYSATYSELEDPGEMSPPIDL) are Cytoplasmic-facing. Phosphotyrosine is present on residues Tyr-219 and Tyr-225. Position 226 is a phosphoserine (Ser-226). Tyr-229 is modified (phosphotyrosine).

It belongs to the MS4A family. Tetramer of an alpha chain, a beta chain, and two disulfide linked gamma chains. Binds LILRB1. Interacts with FGR, FES/FPS and LYN. In terms of processing, phosphorylated on tyrosine residues by LYN. In terms of tissue distribution, found on the surface of mast cells and basophils.

It localises to the membrane. In terms of biological role, high affinity receptor that binds to the Fc region of immunoglobulins epsilon. Aggregation of FCER1 by multivalent antigens is required for the full mast cell response, including the release of preformed mediators (such as histamine) by degranulation and de novo production of lipid mediators and cytokines. Also mediates the secretion of important lymphokines. Binding of allergen to receptor-bound IgE leads to cell activation and the release of mediators responsible for the manifestations of allergy. The polypeptide is High affinity immunoglobulin epsilon receptor subunit beta (MS4A2) (Homo sapiens (Human)).